A 313-amino-acid polypeptide reads, in one-letter code: D-alanine--D-alanine ligase (313 aa).

The 201-residue stretch at 108–308 (KLVWQQTGVP…YSELVVKVLA (201 aa)) folds into the ATP-grasp domain. 138 to 193 (VAKLGLPLFVKPASEGSSVAVLKVKTADALPAALSEAATHDKIVIVEKSIEGGGEY) contacts ATP. Residues Asp262, Glu275, and Asn277 each contribute to the Mg(2+) site.

This sequence belongs to the D-alanine--D-alanine ligase family. Mg(2+) is required as a cofactor. It depends on Mn(2+) as a cofactor.

The protein resides in the cytoplasm. It carries out the reaction 2 D-alanine + ATP = D-alanyl-D-alanine + ADP + phosphate + H(+). It participates in cell wall biogenesis; peptidoglycan biosynthesis. Cell wall formation. This chain is D-alanine--D-alanine ligase, found in Burkholderia ambifaria (strain ATCC BAA-244 / DSM 16087 / CCUG 44356 / LMG 19182 / AMMD) (Burkholderia cepacia (strain AMMD)).